Here is a 340-residue protein sequence, read N- to C-terminus: Anthranilate phosphoribosyltransferase (340 aa).

5-phospho-alpha-D-ribose 1-diphosphate is bound by residues glycine 79, 82–83, threonine 87, 89–92, 107–115, and serine 119; these read GD, NIST, and KHGNRAVTG. Glycine 79 contacts anthranilate. Residue serine 91 coordinates Mg(2+). Asparagine 110 contributes to the anthranilate binding site. Arginine 165 is an anthranilate binding site. Residues aspartate 224 and glutamate 225 each contribute to the Mg(2+) site.

Belongs to the anthranilate phosphoribosyltransferase family. In terms of assembly, homodimer. It depends on Mg(2+) as a cofactor.

It catalyses the reaction N-(5-phospho-beta-D-ribosyl)anthranilate + diphosphate = 5-phospho-alpha-D-ribose 1-diphosphate + anthranilate. It participates in amino-acid biosynthesis; L-tryptophan biosynthesis; L-tryptophan from chorismate: step 2/5. Functionally, catalyzes the transfer of the phosphoribosyl group of 5-phosphorylribose-1-pyrophosphate (PRPP) to anthranilate to yield N-(5'-phosphoribosyl)-anthranilate (PRA). This Syntrophomonas wolfei subsp. wolfei (strain DSM 2245B / Goettingen) protein is Anthranilate phosphoribosyltransferase.